Reading from the N-terminus, the 188-residue chain is dCTP deaminase (188 aa).

DCTP-binding positions include 111–116 (KSTYAR), 135–137 (TLE), glutamine 156, tyrosine 170, and glutamine 180. Glutamate 137 serves as the catalytic Proton donor/acceptor.

It belongs to the dCTP deaminase family. In terms of assembly, homotrimer.

It catalyses the reaction dCTP + H2O + H(+) = dUTP + NH4(+). It participates in pyrimidine metabolism; dUMP biosynthesis; dUMP from dCTP (dUTP route): step 1/2. Its function is as follows. Catalyzes the deamination of dCTP to dUTP. This Pseudomonas putida (strain GB-1) protein is dCTP deaminase.